Reading from the N-terminus, the 546-residue chain is MASKEINFSDSARNKLYEGVRQLADAVKVTMGPRGRNVLIQKSFGAPSITKDGVSVAKEIELADAISNMGAQLVKEVASKTADAAGDGTTTATVLAHGIFKEGLRNITAGANPIEVKRGMDKATAAIIDELKKLSKKVNDKKEIAQVATISANSDENIGSLIAEAMEKVGKDGVITVEEAKGINDELNVVEGMQFDRGYLSPYFVTNSDKMEAVLENPYILLTDKKITSMKDILPLLEGTMKSGRPLLIVAEDIEGEALTTLVVNKLRGVLNVAAVKAPGFGDRRKEMLKDIATLTGGSVISEEIGKTLESATIADLGQAARVVIDKDNSTIVDGKGSKDEVNARVAQIRTQIEATTSDYDREKLQERLAKLSGGVAVIKVGAASEVEMKEKKDRVDDALSATKAAVEEGIVIGGGAALIRAAAKVKLELSGDEKIGYEIIKRAISAPLKQIAQNAGFDAGVVANNVEQNGNENFGFNAANGEYVDMFAEGIIDPLKVARIALQNAVSVSSLLLTTEATISEIKEDKPAMPDMSGMGGMGGMGGMM.

ATP-binding positions include 30 to 33 (TMGP), Lys-51, 87 to 91 (DGTTT), Gly-415, 478 to 480 (NAA), and Asp-494.

The protein belongs to the chaperonin (HSP60) family. As to quaternary structure, forms a cylinder of 14 subunits composed of two heptameric rings stacked back-to-back. Interacts with the co-chaperonin GroES.

It is found in the cytoplasm. The catalysed reaction is ATP + H2O + a folded polypeptide = ADP + phosphate + an unfolded polypeptide.. Its function is as follows. Together with its co-chaperonin GroES, plays an essential role in assisting protein folding. The GroEL-GroES system forms a nano-cage that allows encapsulation of the non-native substrate proteins and provides a physical environment optimized to promote and accelerate protein folding. This is Chaperonin GroEL from Wolinella succinogenes (strain ATCC 29543 / DSM 1740 / CCUG 13145 / JCM 31913 / LMG 7466 / NCTC 11488 / FDC 602W) (Vibrio succinogenes).